A 296-amino-acid chain; its full sequence is Cytidine deaminase (296 aa).

2 CMP/dCMP-type deaminase domains span residues 47-167 (ELNE…FGPS) and 186-296 (DSND…VEPE). 88 to 90 (NIE) contacts substrate. Residue histidine 101 participates in Zn(2+) binding. Glutamate 103 functions as the Proton donor in the catalytic mechanism. Zn(2+)-binding residues include cysteine 128 and cysteine 131.

It belongs to the cytidine and deoxycytidylate deaminase family. As to quaternary structure, homodimer. Zn(2+) is required as a cofactor.

The enzyme catalyses cytidine + H2O + H(+) = uridine + NH4(+). It carries out the reaction 2'-deoxycytidine + H2O + H(+) = 2'-deoxyuridine + NH4(+). This enzyme scavenges exogenous and endogenous cytidine and 2'-deoxycytidine for UMP synthesis. The chain is Cytidine deaminase from Shewanella halifaxensis (strain HAW-EB4).